The primary structure comprises 143 residues: MFLGTYTPKLDDKGRLTLPAKFRDALAGGLMVTKSQDHSLAVYPRAEFEQLARRASKASKSNPDARAFLRNLAAGTDEQHPDAQGRITLSADHRRYASLSKDCVVIGAVDYLEIWDAQAWQDYQQTHEENFSAASDEALGDII.

2 consecutive SpoVT-AbrB domains span residues Thr-5–Glu-47 and Thr-76–Ala-119.

It belongs to the MraZ family. As to quaternary structure, forms oligomers.

The protein resides in the cytoplasm. It localises to the nucleoid. This Mycobacterium avium (strain 104) protein is Transcriptional regulator MraZ.